The sequence spans 145 residues: Ubiquitin-conjugating enzyme E2 variant 1C (145 aa).

Residues 12-145 (PRNFRLLEEL…LVQPPEGTFF (134 aa)) enclose the UBC core domain.

The protein belongs to the ubiquitin-conjugating enzyme family. Heterodimer with UBC35 or UBC36. As to expression, expressed in roots, shoots, leaves, stems and flowers, but not in pollen.

Has no ubiquitin ligase activity on its own. The heterodimer with UBC catalyzes the synthesis of non-canonical poly-ubiquitin chains that are linked through 'Lys-63'. This type of poly-ubiquitination does not lead to protein degradation by the proteasome. Mediates transcriptional activation of target genes. May play a role in the control of progress through the cell cycle and differentiation. May play a role in the error-free DNA repair pathway and contributes to the survival of cells after DNA damage. This is Ubiquitin-conjugating enzyme E2 variant 1C (UEV1C) from Arabidopsis thaliana (Mouse-ear cress).